The following is a 98-amino-acid chain: NADH-ubiquinone oxidoreductase chain 4L (98 aa).

The next 3 membrane-spanning stretches (helical) occupy residues 1 to 21 (MTPVHFSFTSAFILGLMGLAF), 29 to 49 (ALLCLEGMMLSLFIALSLWAL), and 58 to 78 (VAPMLLLAFSACEASAGLALL).

The protein belongs to the complex I subunit 4L family.

Its subcellular location is the mitochondrion membrane. It carries out the reaction a ubiquinone + NADH + 5 H(+)(in) = a ubiquinol + NAD(+) + 4 H(+)(out). Its function is as follows. Core subunit of the mitochondrial membrane respiratory chain NADH dehydrogenase (Complex I) which catalyzes electron transfer from NADH through the respiratory chain, using ubiquinone as an electron acceptor. Part of the enzyme membrane arm which is embedded in the lipid bilayer and involved in proton translocation. The chain is NADH-ubiquinone oxidoreductase chain 4L (MT-ND4L) from Salmo salar (Atlantic salmon).